We begin with the raw amino-acid sequence, 935 residues long: MSGNNIKVVCRFRPQNSLEIREGGTPIIDIDPEGTQLELKGKEFKGNFNFDKVFGMNTAQKDVFDYSIKTIVDDVTAGYNGTVFAYGQTGSGKTFTMMGADIDDEKTKGIIPRIVEQIFDSIMASPSNLEFTVKVSYMEIYMEKVRDLLNPSSENLPIHEDKTKGVYVKGLLEVYVGSTDEVYEVMRRGSNNRVVAYTNMNAESSRSHSIVMFTITQKNVDTGAAKSGKLYLVDLAGSEKVGKTGASGQTLEEAKKINKSLTALGMVINALTDGKSSHVPYRDSKLTRILQESLGGNSRTTLIINCSPSSYNEAETLSTLRFGARAKSIKNKAKVNADLSPAELKALLKKVKSEAVTYQTYIAALEGEVNVWRTGGTVPEGKWVTMDKVSKGDFAGLPPAPGFKSPVSDEGSRPATPVPTLEKDEREEFIKRENELMDQISEKETELTNREKLLESLREEMGYYKEQEQSVTKENQQMTSELSELRLQLQKVSYESKENAITVDSLKEANQDLMAELEELKKNLSEMRQAHKDATDSDKEKRKAEKMAQMMSGFDPSGILNDKERQIRNALSKLDGEQQQTLTVEDLVSLRRELAESKMLVEQHTKTISDLSADKDAMEAKKIELEGRLGALEKEYEELLDKTIAEEEANMQNADVDNLSALKTKLEAQYAEKKEVQQKEIDDLKRELDRKQSGHEKLSAAMTDLRAANDQLQAALSEQPFQAPQDNSDMTEKEKDIERTRKSMAQQLADFEVMKKALMRDLQNRCEKVVELEMSLDETREQYNNVLRASNNKAQQKKMAFLERNLEQLTNVQKQLVEQNASLKKEVALAERKLIARNERIQSLETLLHNAQDKLLNQNKKFEQQLATVRERLEQARSQKSQNSLAALNFSRIAKPLRGNGAAIDNGSDDGSLPTSPTDKRDKRSSWMPGFMNSR.

The region spanning 5 to 329 is the Kinesin motor domain; sequence NIKVVCRFRP…LRFGARAKSI (325 aa). ATP-binding positions include 87–94 and 237–244; these read GQTGSGKT and GSEKVGKT. Residues 342–887 are a coiled coil; that stretch reads AELKALLKKV…SQKSQNSLAA (546 aa). 2 disordered regions span residues 400–419 and 898–935; these read APGFKSPVSDEGSRPATPVP and RGNGAAIDNGSDDGSLPTSPTDKRDKRSSWMPGFMNSR.

This sequence belongs to the TRAFAC class myosin-kinesin ATPase superfamily. Kinesin family. Kinesin subfamily.

The protein resides in the cytoplasm. Its subcellular location is the cytoskeleton. Kinesin is a microtubule-associated force-producing protein that may play a role in organelle transport. Its motor activity is directed toward the microtubule's plus end. The speed of this motor is 4-5 times faster than its animal counterparts. The chain is Kinesin heavy chain from Syncephalastrum racemosum (Filamentous fungus).